Reading from the N-terminus, the 194-residue chain is Peptidyl-tRNA hydrolase (194 aa).

Tyr-17 provides a ligand contact to tRNA. The active-site Proton acceptor is the His-22. The tRNA site is built by Phe-68, Asn-70, and Asn-116.

It belongs to the PTH family. Monomer.

Its subcellular location is the cytoplasm. It carries out the reaction an N-acyl-L-alpha-aminoacyl-tRNA + H2O = an N-acyl-L-amino acid + a tRNA + H(+). Functionally, hydrolyzes ribosome-free peptidyl-tRNAs (with 1 or more amino acids incorporated), which drop off the ribosome during protein synthesis, or as a result of ribosome stalling. In terms of biological role, catalyzes the release of premature peptidyl moieties from peptidyl-tRNA molecules trapped in stalled 50S ribosomal subunits, and thus maintains levels of free tRNAs and 50S ribosomes. The sequence is that of Peptidyl-tRNA hydrolase from Proteus mirabilis (strain HI4320).